The sequence spans 2220 residues: Non-reducing polyketide synthase stbA (2220 aa).

Residues 10 to 255 (IFSPQNSPPK…HDATNTDMAQ (246 aa)) are N-terminal acylcarrier protein transacylase domain (SAT). The 425-residue stretch at 379 to 803 (SDAIAVVGAG…GSNSALICSE (425 aa)) folds into the Ketosynthase family 3 (KS3) domain. Active-site for beta-ketoacyl synthase activity residues include C551, H687, and H726. A malonyl-CoA:ACP transacylase (MAT) domain region spans residues 906–1207 (LAFSGQSRTN…ADATQHTFQA (302 aa)). S993 acts as the For acyl/malonyl transferase activity in catalysis. The N-terminal hotdog fold stretch occupies residues 1287–1414 (EPRAAQLVRY…GDFTMTAGPH (128 aa)). In terms of domain architecture, PKS/mFAS DH spans 1287–1589 (EPRAAQLVRY…FHKTSMTKLL (303 aa)). The interval 1292-1588 (QLVRYKGALG…HFHKTSMTKL (297 aa)) is product template (PT) domain. The active-site Proton acceptor; for dehydratase activity is the H1323. Residues 1436 to 1589 (DAEKLRKRTA…FHKTSMTKLL (154 aa)) form a C-terminal hotdog fold region. Catalysis depends on D1500, which acts as the Proton donor; for dehydratase activity. Carrier domains lie at 1634-1711 (AAGP…SGGA) and 1742-1821 (PAGP…AADV). O-(pantetheine 4'-phosphoryl)serine is present on residues S1671 and S1779. The segment at 1879 to 2210 (TRFRMETVVY…YDFIFTELEN (332 aa)) is thioesterase (TE) domain. Active-site for thioesterase activity residues include S1999 and D2148.

It catalyses the reaction 3 malonyl-CoA + acetyl-CoA + 2 H(+) = orsellinate + 3 CO2 + 4 CoA. Its pathway is secondary metabolite biosynthesis; terpenoid biosynthesis. Non-reducing polyketide synthase; part of the cluster that mediates the biosynthesis of LL-Z1272-beta, also known as ilicicolin B, a prenylated aryl-aldehyde produced by several fungi and that serves as a key pathway intermediate for many fungal meroterpenoids. The first step in the pathway is performed by the non-reducing polyketide synthase stbA that produces orsellinic acid by condensing acetyl-CoA with 3 malonyl-CoA units. The prenyltransferase stbC then prenylates orsenilic acid into grifolic acid. Finally, grifolic acid is reduced to ilicicolin B by the NRPS-like protein stbB. This chain is Non-reducing polyketide synthase stbA, found in Stachybotrys bisbyi (Hyalostachybotrys bisbyi).